Consider the following 39-residue polypeptide: Metallocarboxypeptidase inhibitor (39 aa).

Residue Q1 is modified to Pyrrolidone carboxylic acid. 3 disulfide bridges follow: C8/C24, C12/C27, and C18/C34.

Highly concentrated in tubers. Closely related but distinct forms of MCPI are present in leaves, stems and buds.

May play a defensive role against insect attacks. Inhibits A.aegypti carboxypeptidase CPB1. This chain is Metallocarboxypeptidase inhibitor, found in Solanum tuberosum (Potato).